Here is a 159-residue protein sequence, read N- to C-terminus: Allergen Arg r 1 (159 aa).

The signal sequence occupies residues 1-16 (MALIILLVACLSVVSA). 2 disulfide bridges follow: cysteine 50-cysteine 155 and cysteine 109-cysteine 134.

This sequence belongs to the calycin superfamily. Histamine-binding salivary protein family. Not glycosylated.

The protein resides in the secreted. This chain is Allergen Arg r 1, found in Argas reflexus (European pigeon tick).